The primary structure comprises 454 residues: Bifunctional protein GlmU (454 aa).

The interval 1–233 (MQATPRPLAL…EAETIGINSR (233 aa)) is pyrophosphorylase. Residues 13-16 (LAAG), lysine 27, glutamine 80, 85-86 (GT), 108-110 (YGD), glycine 145, glutamate 159, asparagine 174, and asparagine 231 contribute to the UDP-N-acetyl-alpha-D-glucosamine site. Position 110 (aspartate 110) interacts with Mg(2+). Asparagine 231 contributes to the Mg(2+) binding site. Residues 234–254 (AELVRAEAQFQSQRRAALIEA) form a linker region. The segment at 255–454 (GVTMQAPDSV…KAIKDAKSKD (200 aa)) is N-acetyltransferase. UDP-N-acetyl-alpha-D-glucosamine is bound by residues arginine 320 and lysine 338. The active-site Proton acceptor is the histidine 350. UDP-N-acetyl-alpha-D-glucosamine is bound by residues tyrosine 353 and asparagine 364. Residues alanine 367, 373 to 374 (NY), serine 392, serine 410, and arginine 427 contribute to the acetyl-CoA site.

It in the N-terminal section; belongs to the N-acetylglucosamine-1-phosphate uridyltransferase family. This sequence in the C-terminal section; belongs to the transferase hexapeptide repeat family. In terms of assembly, homotrimer. Mg(2+) serves as cofactor.

The protein localises to the cytoplasm. The enzyme catalyses alpha-D-glucosamine 1-phosphate + acetyl-CoA = N-acetyl-alpha-D-glucosamine 1-phosphate + CoA + H(+). It carries out the reaction N-acetyl-alpha-D-glucosamine 1-phosphate + UTP + H(+) = UDP-N-acetyl-alpha-D-glucosamine + diphosphate. It participates in nucleotide-sugar biosynthesis; UDP-N-acetyl-alpha-D-glucosamine biosynthesis; N-acetyl-alpha-D-glucosamine 1-phosphate from alpha-D-glucosamine 6-phosphate (route II): step 2/2. It functions in the pathway nucleotide-sugar biosynthesis; UDP-N-acetyl-alpha-D-glucosamine biosynthesis; UDP-N-acetyl-alpha-D-glucosamine from N-acetyl-alpha-D-glucosamine 1-phosphate: step 1/1. The protein operates within bacterial outer membrane biogenesis; LPS lipid A biosynthesis. Functionally, catalyzes the last two sequential reactions in the de novo biosynthetic pathway for UDP-N-acetylglucosamine (UDP-GlcNAc). The C-terminal domain catalyzes the transfer of acetyl group from acetyl coenzyme A to glucosamine-1-phosphate (GlcN-1-P) to produce N-acetylglucosamine-1-phosphate (GlcNAc-1-P), which is converted into UDP-GlcNAc by the transfer of uridine 5-monophosphate (from uridine 5-triphosphate), a reaction catalyzed by the N-terminal domain. The chain is Bifunctional protein GlmU from Jannaschia sp. (strain CCS1).